The primary structure comprises 413 residues: Extracellular sucrase (413 aa).

The active-site Nucleophile is the aspartate 44. Glutamate 276 (proton donor/acceptor) is an active-site residue.

The protein belongs to the glycosyl hydrolase 68 family.

It localises to the secreted. It carries out the reaction Hydrolysis of terminal non-reducing beta-D-fructofuranoside residues in beta-D-fructofuranosides.. The chain is Extracellular sucrase (sacC) from Zymomonas mobilis subsp. mobilis (strain ATCC 10988 / DSM 424 / LMG 404 / NCIMB 8938 / NRRL B-806 / ZM1).